The following is a 267-amino-acid chain: Mediator of RNA polymerase II transcription subunit 8 (267 aa).

2 coiled-coil regions span residues 2 to 27 and 118 to 163; these read QQRE…KGSL and VEEQ…EDRD. Over residues 156–165 the composition is skewed to basic and acidic residues; that stretch reads NNPREDRDSE. Disordered regions lie at residues 156-180 and 227-267; these read NNPR…NPAD and ASGH…PYNR. Positions 166-180 are enriched in polar residues; sequence TSALRQNKPSFNPAD. Over residues 236-247 the composition is skewed to low complexity; it reads GPVAPQQPGQPG.

This sequence belongs to the Mediator complex subunit 8 family. As to quaternary structure, component of the Mediator complex. May be part of a multisubunit E3 ubiquitin-protein ligase complex.

The protein localises to the nucleus. It functions in the pathway protein modification; protein ubiquitination. Its function is as follows. Component of the Mediator complex, a coactivator involved in the regulated transcription of nearly all RNA polymerase II-dependent genes. Mediator functions as a bridge to convey information from gene-specific regulatory proteins to the basal RNA polymerase II transcription machinery. Mediator is recruited to promoters by direct interactions with regulatory proteins and serves as a scaffold for the assembly of a functional preinitiation complex with RNA polymerase II and the general transcription factors. May play a role as a target recruitment subunit in E3 ubiquitin-protein ligase complexes and thus in ubiquitination and subsequent proteasomal degradation of target proteins. The polypeptide is Mediator of RNA polymerase II transcription subunit 8 (med8) (Danio rerio (Zebrafish)).